A 121-amino-acid polypeptide reads, in one-letter code: Holo-[acyl-carrier-protein] synthase (121 aa).

Residues aspartate 8 and glutamate 58 each contribute to the Mg(2+) site.

It belongs to the P-Pant transferase superfamily. AcpS family. It depends on Mg(2+) as a cofactor.

It localises to the cytoplasm. It carries out the reaction apo-[ACP] + CoA = holo-[ACP] + adenosine 3',5'-bisphosphate + H(+). Functionally, transfers the 4'-phosphopantetheine moiety from coenzyme A to a Ser of acyl-carrier-protein. The sequence is that of Holo-[acyl-carrier-protein] synthase from Bacillus pumilus (strain SAFR-032).